Here is a 471-residue protein sequence, read N- to C-terminus: Heat shock 70 kDa protein 13 (471 aa).

Residues 1-22 (MAGEMTILGSAVLTLLLAGYLA) form the signal peptide. Residues 317–330 (DSKEPQNGDSELPK) show a composition bias toward basic and acidic residues. Positions 317–350 (DSKEPQNGDSELPKDQLTPGDGHHVNRVFRPGLS) are disordered.

The protein belongs to the heat shock protein 70 family. In terms of assembly, binds UBQLN2.

It is found in the microsome. Its subcellular location is the endoplasmic reticulum. Functionally, has peptide-independent ATPase activity. The protein is Heat shock 70 kDa protein 13 (Hspa13) of Mus musculus (Mouse).